The primary structure comprises 342 residues: Holliday junction branch migration complex subunit RuvB (342 aa).

A large ATPase domain (RuvB-L) region spans residues 1 to 181; the sequence is MENRMVTPFD…FGMLCAMEFY (181 aa). ATP contacts are provided by residues L20, R21, G62, K65, T66, T67, 128–130, R171, Y181, and R218; that span reads EDY. A Mg(2+)-binding site is contributed by T66. Residues 182–252 are small ATPAse domain (RuvB-S); the sequence is TDEELMEIVV…GAKAALDLLE (71 aa). Residues 255–342 form a head domain (RuvB-H) region; that stretch reads KEGLDKIDNK…KDNQVSIFNK (88 aa). Positions 310 and 315 each coordinate DNA.

This sequence belongs to the RuvB family. Homohexamer. Forms an RuvA(8)-RuvB(12)-Holliday junction (HJ) complex. HJ DNA is sandwiched between 2 RuvA tetramers; dsDNA enters through RuvA and exits via RuvB. An RuvB hexamer assembles on each DNA strand where it exits the tetramer. Each RuvB hexamer is contacted by two RuvA subunits (via domain III) on 2 adjacent RuvB subunits; this complex drives branch migration. In the full resolvosome a probable DNA-RuvA(4)-RuvB(12)-RuvC(2) complex forms which resolves the HJ.

Its subcellular location is the cytoplasm. It carries out the reaction ATP + H2O = ADP + phosphate + H(+). Functionally, the RuvA-RuvB-RuvC complex processes Holliday junction (HJ) DNA during genetic recombination and DNA repair, while the RuvA-RuvB complex plays an important role in the rescue of blocked DNA replication forks via replication fork reversal (RFR). RuvA specifically binds to HJ cruciform DNA, conferring on it an open structure. The RuvB hexamer acts as an ATP-dependent pump, pulling dsDNA into and through the RuvAB complex. RuvB forms 2 homohexamers on either side of HJ DNA bound by 1 or 2 RuvA tetramers; 4 subunits per hexamer contact DNA at a time. Coordinated motions by a converter formed by DNA-disengaged RuvB subunits stimulates ATP hydrolysis and nucleotide exchange. Immobilization of the converter enables RuvB to convert the ATP-contained energy into a lever motion, pulling 2 nucleotides of DNA out of the RuvA tetramer per ATP hydrolyzed, thus driving DNA branch migration. The RuvB motors rotate together with the DNA substrate, which together with the progressing nucleotide cycle form the mechanistic basis for DNA recombination by continuous HJ branch migration. Branch migration allows RuvC to scan DNA until it finds its consensus sequence, where it cleaves and resolves cruciform DNA. This Clostridium botulinum (strain ATCC 19397 / Type A) protein is Holliday junction branch migration complex subunit RuvB.